A 251-amino-acid chain; its full sequence is Flap endonuclease Xni (251 aa).

D104 serves as a coordination point for Mg(2+). A 5'-3' exonuclease domain is found at 160–249 (VLPQQLPDYW…IDGNLQQLRL (90 aa)). 5 residues coordinate K(+): L171, A172, P180, V182, and I185. An interaction with DNA region spans residues 184–189 (GIGPKS).

The protein belongs to the Xni family. Requires Mg(2+) as cofactor. The cofactor is K(+).

Functionally, has flap endonuclease activity. During DNA replication, flap endonucleases cleave the 5'-overhanging flap structure that is generated by displacement synthesis when DNA polymerase encounters the 5'-end of a downstream Okazaki fragment. This is Flap endonuclease Xni from Citrobacter koseri (strain ATCC BAA-895 / CDC 4225-83 / SGSC4696).